The following is a 3010-amino-acid chain: Probable polyketide synthase 2 (3010 aa).

A Ketosynthase family 3 (KS3) domain is found at Ser-9–Glu-432. Residues Cys-174, His-313, and His-353 each act as for beta-ketoacyl synthase activity in the active site. Positions Gly-629–Tyr-662 are acyl/malonyl transferase. The For acyl/malonyl transferase activity role is filled by Ser-639. Residues Ala-944–Ser-1063 form an N-terminal hotdog fold region. One can recognise a PKS/mFAS DH domain in the interval Ala-944–Asn-1235. His-976 (proton acceptor; for dehydratase activity) is an active-site residue. The interval Asn-1080 to Asn-1235 is C-terminal hotdog fold. Residue Asp-1146 is the Proton donor; for dehydratase activity of the active site. Residues Asp-2482–Val-2559 form the Carrier domain. Ser-2519 is modified (O-(pantetheine 4'-phosphoryl)serine).

Pantetheine 4'-phosphate is required as a cofactor.

Its function is as follows. Probable polyketide synthase. This chain is Probable polyketide synthase 2 (pks2), found in Dictyostelium discoideum (Social amoeba).